Here is a 360-residue protein sequence, read N- to C-terminus: UDP-3-O-acylglucosamine N-acyltransferase (360 aa).

Residue histidine 253 is the Proton acceptor of the active site.

Belongs to the transferase hexapeptide repeat family. LpxD subfamily. As to quaternary structure, homotrimer.

The catalysed reaction is a UDP-3-O-[(3R)-3-hydroxyacyl]-alpha-D-glucosamine + a (3R)-hydroxyacyl-[ACP] = a UDP-2-N,3-O-bis[(3R)-3-hydroxyacyl]-alpha-D-glucosamine + holo-[ACP] + H(+). It participates in bacterial outer membrane biogenesis; LPS lipid A biosynthesis. Its function is as follows. Catalyzes the N-acylation of UDP-3-O-acylglucosamine using 3-hydroxyacyl-ACP as the acyl donor. Is involved in the biosynthesis of lipid A, a phosphorylated glycolipid that anchors the lipopolysaccharide to the outer membrane of the cell. The sequence is that of UDP-3-O-acylglucosamine N-acyltransferase from Burkholderia multivorans (strain ATCC 17616 / 249).